Reading from the N-terminus, the 280-residue chain is Ribosomal RNA small subunit methyltransferase A (280 aa).

S-adenosyl-L-methionine-binding residues include histidine 13, leucine 15, glycine 40, glutamate 61, aspartate 85, and asparagine 105.

Belongs to the class I-like SAM-binding methyltransferase superfamily. rRNA adenine N(6)-methyltransferase family. RsmA subfamily.

It is found in the cytoplasm. The enzyme catalyses adenosine(1518)/adenosine(1519) in 16S rRNA + 4 S-adenosyl-L-methionine = N(6)-dimethyladenosine(1518)/N(6)-dimethyladenosine(1519) in 16S rRNA + 4 S-adenosyl-L-homocysteine + 4 H(+). Its function is as follows. Specifically dimethylates two adjacent adenosines (A1518 and A1519) in the loop of a conserved hairpin near the 3'-end of 16S rRNA in the 30S particle. May play a critical role in biogenesis of 30S subunits. This Phocaeicola vulgatus (strain ATCC 8482 / DSM 1447 / JCM 5826 / CCUG 4940 / NBRC 14291 / NCTC 11154) (Bacteroides vulgatus) protein is Ribosomal RNA small subunit methyltransferase A.